The following is a 191-amino-acid chain: Peptidyl-tRNA hydrolase (191 aa).

Tyr16 contacts tRNA. His21 (proton acceptor) is an active-site residue. TRNA is bound by residues Phe66, Asn68, and Asn114.

It belongs to the PTH family. In terms of assembly, monomer.

Its subcellular location is the cytoplasm. It catalyses the reaction an N-acyl-L-alpha-aminoacyl-tRNA + H2O = an N-acyl-L-amino acid + a tRNA + H(+). Functionally, hydrolyzes ribosome-free peptidyl-tRNAs (with 1 or more amino acids incorporated), which drop off the ribosome during protein synthesis, or as a result of ribosome stalling. Catalyzes the release of premature peptidyl moieties from peptidyl-tRNA molecules trapped in stalled 50S ribosomal subunits, and thus maintains levels of free tRNAs and 50S ribosomes. This is Peptidyl-tRNA hydrolase from Geotalea daltonii (strain DSM 22248 / JCM 15807 / FRC-32) (Geobacter daltonii).